The chain runs to 438 residues: Ammonium transporter Rh type A (438 aa).

Topologically, residues 1–4 (MRFK) are cytoplasmic. Residues 5-25 (FPLMAISLEVAMIVLFGLFVE) form a helical membrane-spanning segment. Residues 26–61 (YETPQNASQKNASHQNASQQGNTSSSAKKDQFFQLY) lie on the Extracellular side of the membrane. N-linked (GlcNAc...) asparagine glycosylation is found at Asn-31, Asn-36, Asn-41, and Asn-47. The chain crosses the membrane as a helical span at residues 62 to 82 (PLFQDVHVMIFVGFGFLMTFL). At 83–86 (KKYG) the chain is on the cytoplasmic side. A helical transmembrane segment spans residues 87 to 107 (FSGVGFNLFLAALGLQWGTIM). The Extracellular portion of the chain corresponds to 108 to 121 (QGLLHSHGKEFHFG). A helical transmembrane segment spans residues 122–142 (IYNMINADFSTATVLISFGAV). Residues 143 to 148 (LGKTSP) lie on the Cytoplasmic side of the membrane. A helical membrane pass occupies residues 149–169 (IQMLIMTILEIAVFAGNEYLV). The Extracellular segment spans residues 170-178 (TELFEASDT). The chain crosses the membrane as a helical span at residues 179–199 (GASMTIHAFGAYFGLAVAGVL). Residues 200–218 (YRPGLRCEHPNDESVYHSD) lie on the Cytoplasmic side of the membrane. Residues 219–239 (LFAMIGTLFLWIFWPSFNSAI) form a helical membrane-spanning segment. Residues 240-249 (ADPGDHQYRA) are Extracellular-facing. A helical membrane pass occupies residues 250–270 (IVNTYMSLAACVITAYALSSL). Topologically, residues 271 to 278 (VERRGRLD) are cytoplasmic. A helical membrane pass occupies residues 279-296 (MVHIQNATLAGGVAVGTC). Residues 297-300 (ADME) lie on the Extracellular side of the membrane. A helical membrane pass occupies residues 301-321 (IPLYAAMTIGSIAGIISVLGY). Over 322–342 (KFFSPLLANKLMIHDTCGVHN) the chain is Cytoplasmic. The chain crosses the membrane as a helical span at residues 343–363 (LHGLPGVFGGLASIVAISWGM). Topologically, residues 364–372 (STASMAMQA) are extracellular. The helical transmembrane segment at 373–393 (AALGSSIGSAIVGGLLTGLIL) threads the bilayer. The Cytoplasmic segment spans residues 394-438 (KLPIWNQPPDEYCYDDSVSWKVPKFRELDNRFFQHANHNHVEHEV).

The protein belongs to the ammonium transporter (TC 2.A.49) family. Rh subfamily. Homodimer. Heterotrimer; a RHCE monomer interacts with a RHAG homodimer. Component of the ankyrin-1 complex in the erythrocyte, composed of ANK1, RHCE, RHAG, SLC4A1, EPB42, GYPA, GYPB and AQP1. Interacts with GYPB (via the N-terminal); this interaction bridges the (RHAG)2(RHCE) heterotrimer with the SLC4A1 Band 3 I dimer complexed with GYPA. Glycosylated.

It is found in the membrane. It catalyses the reaction methylamine(out) = methylamine(in). The catalysed reaction is NH4(+)(in) = NH4(+)(out). It carries out the reaction CO2(out) = CO2(in). Its function is as follows. Component of the ankyrin-1 complex, a multiprotein complex involved in the stability and shape of the erythrocyte membrane. Heterotrimer with RHCE (RHAG)2(RHCE), that transports ammonium and its related derivative methylammonium, in both neutral and ionic forms, across the erythrocyte membrane. The transport of NH4(+) is electrogenic and masks the NH3 transport. Also, may act as a CO2 channel. Moreover in erythrocyte, regulates RHD membrane expression and is associated with rhesus blood group antigen expression. This is Ammonium transporter Rh type A from Mus musculus (Mouse).